The sequence spans 332 residues: Fructose-1,6-bisphosphatase class 1 (332 aa).

Mg(2+)-binding residues include Glu-89, Asp-110, Leu-112, and Asp-113. Substrate contacts are provided by residues 113 to 116 (DGSS), Asn-206, Tyr-239, 257 to 259 (YLY), and Lys-269. A Mg(2+)-binding site is contributed by Glu-275.

Belongs to the FBPase class 1 family. As to quaternary structure, homotetramer. It depends on Mg(2+) as a cofactor.

The protein resides in the cytoplasm. It carries out the reaction beta-D-fructose 1,6-bisphosphate + H2O = beta-D-fructose 6-phosphate + phosphate. The protein operates within carbohydrate biosynthesis; gluconeogenesis. This Citrobacter koseri (strain ATCC BAA-895 / CDC 4225-83 / SGSC4696) protein is Fructose-1,6-bisphosphatase class 1.